Consider the following 250-residue polypeptide: Thioesterase FPSE_09186 (250 aa).

Belongs to the AMT4 thioesterase family.

It functions in the pathway secondary metabolite biosynthesis. In terms of biological role, thioesterase; part of the gene cluster that mediates the biosynthesis of the lipopeptides W493 A and B. W493 A and B consist of six amino acid residues D-allo-thr, L-Ala, D-Ala, L-Gln, D-Tyr, and L-Val/L-Ile linked to a 3-hydroxy-4-methyltetradecanoic acid polyketide chain. The biosynthesis starts with formation of the linear polyketide chain by the highly reducing polyketide synthase PKS40. The gene cluster contains a putative acyl-CoA ligase (FPSE_09184) for formation of a CoA thioester polyketide. The thiol bond could be hydrolyzed by the putative thioesterase (FPSE_09186) and then accepted by the first T domain in module 1 of NRPS32. The second T domain is responsible for accepting a threonine, which is adenylated by the A domain and epimerized to the D-allo-threonine formed by the E domain. The five successive modules incorporate Ala, Ala, Gln, Tyr, and Val/Ile into the final product, which is released by cyclization. The sequence is that of Thioesterase FPSE_09186 from Fusarium pseudograminearum (strain CS3096) (Wheat and barley crown-rot fungus).